The following is a 360-amino-acid chain: Phospho-N-acetylmuramoyl-pentapeptide-transferase (360 aa).

The next 10 helical transmembrane spans lie at Thr-25 to Asp-45, Thr-71 to Ala-91, Leu-94 to Tyr-114, Ser-129 to Leu-148, Thr-168 to Gly-188, Gly-199 to Ala-219, Leu-239 to Pro-259, Ile-263 to Ala-283, Phe-288 to Val-308, and Gln-337 to Leu-357.

It belongs to the glycosyltransferase 4 family. MraY subfamily. Requires Mg(2+) as cofactor.

Its subcellular location is the cell inner membrane. It catalyses the reaction UDP-N-acetyl-alpha-D-muramoyl-L-alanyl-gamma-D-glutamyl-meso-2,6-diaminopimeloyl-D-alanyl-D-alanine + di-trans,octa-cis-undecaprenyl phosphate = di-trans,octa-cis-undecaprenyl diphospho-N-acetyl-alpha-D-muramoyl-L-alanyl-D-glutamyl-meso-2,6-diaminopimeloyl-D-alanyl-D-alanine + UMP. Its pathway is cell wall biogenesis; peptidoglycan biosynthesis. Its function is as follows. Catalyzes the initial step of the lipid cycle reactions in the biosynthesis of the cell wall peptidoglycan: transfers peptidoglycan precursor phospho-MurNAc-pentapeptide from UDP-MurNAc-pentapeptide onto the lipid carrier undecaprenyl phosphate, yielding undecaprenyl-pyrophosphoryl-MurNAc-pentapeptide, known as lipid I. This chain is Phospho-N-acetylmuramoyl-pentapeptide-transferase, found in Rhodopseudomonas palustris (strain BisA53).